An 894-amino-acid chain; its full sequence is RNA polymerase I-specific transcription initiation factor RRN6 (894 aa).

The interval 803–894 (PPFNLNSQSQ…KKKKRIRGFG (92 aa)) is disordered. Polar residues-rich tracts occupy residues 806-823 (NLNS…QSSG), 832-849 (KTQS…QNLS), and 863-880 (QPPS…PRNS). The segment covering 881 to 894 (QKAKKKKKRIRGFG) has biased composition (basic residues).

Component of the core factor (CF) complex, which consists of RRN6, RRN7 and RRN11. The CF heterotrimer may further dimerize to form a hexamer. RRN6 interacts with RRN7, RRN11 and RRN9.

It is found in the cytoplasm. The protein localises to the nucleus. The protein resides in the nucleolus. In terms of biological role, acts as a component of the core factor (CF) complex which is essential for the initiation of rDNA transcription by RNA polymerase I. After binding of UAF (upstream activation factor) to an upstream element of the promoter, CF is recruited in a SPT15/TBP-dependent manner to form a preinitiation complex. In Saccharomyces cerevisiae (strain ATCC 204508 / S288c) (Baker's yeast), this protein is RNA polymerase I-specific transcription initiation factor RRN6 (RRN6).